A 596-amino-acid polypeptide reads, in one-letter code: MTDLTAQEPAWQTRDHLDDPVIGELRNRFGPDAFTVQATRTGVPVVWIKREQLLEVGDFLKKLPKPYVMLFDLHGMDERLRTHREGLPAADFSVFYHLISIDRNRDIMLKVALAENDLHVPTFTKLFPNANWYERETWDLFGITFDGHPNLRRIMMPQTWKGHPLRKDYPARATEFSPFELTKAKQDLEMEALTFKPEEWGMKRGTENEDFMFLNLGPNHPSAHGAFRIVLQLDGEEIVDCVPDIGYHHRGAEKMGERQSWHSYIPYTDRIEYLGGCVNEMPYVLAVEKLAGITVPDRVNVIRVMLSELFRINSHLLYISTFIQDVGAMTPVFFAFTDRQKIYDLVEAITGFRMHPAWFRIGGVAHDLPRGWDRLLREFLDWMPKRLASYEKAALQNTILKGRSQGVAAYGAKEALEWGTTGAGLRATGIDFDVRKARPYSGYENFDFEIPVGGGVSDCYTRVMLKVEELRQSLRILEQCLNNMPEGPFKADHPLTTPPPKERTLQHIETLITHFLQVSWGPVMPANESFQMIEATKGINSYYLTSDGSTMSYRTRIRTPSYAHLQQIPAAIRGSLVSDLIVYLGSIDFVMSDVDR.

The NADH dehydrogenase I subunit C stretch occupies residues 1–186 (MTDLTAQEPA…SPFELTKAKQ (186 aa)). The interval 210-596 (DFMFLNLGPN…IDFVMSDVDR (387 aa)) is NADH dehydrogenase I subunit D.

The protein in the N-terminal section; belongs to the complex I 30 kDa subunit family. It in the C-terminal section; belongs to the complex I 49 kDa subunit family. As to quaternary structure, NDH-1 is composed of 13 different subunits. Subunits NuoB, CD, E, F, and G constitute the peripheral sector of the complex.

The protein resides in the cell inner membrane. It catalyses the reaction a quinone + NADH + 5 H(+)(in) = a quinol + NAD(+) + 4 H(+)(out). In terms of biological role, NDH-1 shuttles electrons from NADH, via FMN and iron-sulfur (Fe-S) centers, to quinones in the respiratory chain. The immediate electron acceptor for the enzyme in this species is believed to be ubiquinone. Couples the redox reaction to proton translocation (for every two electrons transferred, four hydrogen ions are translocated across the cytoplasmic membrane), and thus conserves the redox energy in a proton gradient. The chain is NADH-quinone oxidoreductase subunit C/D from Shigella flexneri serotype 5b (strain 8401).